The following is a 263-amino-acid chain: 3-methyl-2-oxobutanoate hydroxymethyltransferase (263 aa).

Asp-45 and Asp-84 together coordinate Mg(2+). Residues Asp-45–Ser-46, Asp-84, and Lys-112 contribute to the 3-methyl-2-oxobutanoate site. Residue Glu-114 participates in Mg(2+) binding. Catalysis depends on Glu-181, which acts as the Proton acceptor.

The protein belongs to the PanB family. As to quaternary structure, homodecamer; pentamer of dimers. The cofactor is Mg(2+).

The protein localises to the cytoplasm. The enzyme catalyses 3-methyl-2-oxobutanoate + (6R)-5,10-methylene-5,6,7,8-tetrahydrofolate + H2O = 2-dehydropantoate + (6S)-5,6,7,8-tetrahydrofolate. It participates in cofactor biosynthesis; (R)-pantothenate biosynthesis; (R)-pantoate from 3-methyl-2-oxobutanoate: step 1/2. Catalyzes the reversible reaction in which hydroxymethyl group from 5,10-methylenetetrahydrofolate is transferred onto alpha-ketoisovalerate to form ketopantoate. The sequence is that of 3-methyl-2-oxobutanoate hydroxymethyltransferase from Chromohalobacter salexigens (strain ATCC BAA-138 / DSM 3043 / CIP 106854 / NCIMB 13768 / 1H11).